The primary structure comprises 243 residues: Probable transcriptional regulatory protein LCA_1307 (243 aa).

The disordered stretch occupies residues 1–21 (MSGHSKWHNIQGRKNAQDAKR).

The protein belongs to the TACO1 family.

It is found in the cytoplasm. In Latilactobacillus sakei subsp. sakei (strain 23K) (Lactobacillus sakei subsp. sakei), this protein is Probable transcriptional regulatory protein LCA_1307.